The following is a 438-amino-acid chain: Adenosylhomocysteinase (438 aa).

Residues Thr-61, Asp-137, and Glu-162 each coordinate substrate. 163 to 165 (TTT) is an NAD(+) binding site. The substrate site is built by Lys-192 and Asp-196. Residues Asn-197, 226 to 231 (GYGDVG), Glu-249, Asn-284, 305 to 307 (IGH), and Asn-352 each bind NAD(+).

This sequence belongs to the adenosylhomocysteinase family. NAD(+) is required as a cofactor.

The protein resides in the cytoplasm. The enzyme catalyses S-adenosyl-L-homocysteine + H2O = L-homocysteine + adenosine. Its pathway is amino-acid biosynthesis; L-homocysteine biosynthesis; L-homocysteine from S-adenosyl-L-homocysteine: step 1/1. Functionally, may play a key role in the regulation of the intracellular concentration of adenosylhomocysteine. The protein is Adenosylhomocysteinase of Christiangramia forsetii (strain DSM 17595 / CGMCC 1.15422 / KT0803) (Gramella forsetii).